A 272-amino-acid chain; its full sequence is Alkaline ceramidase (272 aa).

2 helical membrane passes run 34-54 and 61-81; these read FANT…IMLL and VNGG…ASTY. Zn(2+) is bound at residue H83. The next 4 membrane-spanning stretches (helical) occupy residues 96–116, 124–144, 148–168, and 183–203; these read LSLV…MKWF, LTVV…LCFL, LNAI…RYEG, and ILAL…LCDF. Residues H213 and H217 each contribute to the Zn(2+) site. The helical transmembrane segment at 214–234 threads the bilayer; it reads ALFHLLAGLAGYTIFIMFSMI. N256 carries an N-linked (GlcNAc...) asparagine glycan.

This sequence belongs to the alkaline ceramidase family. The cofactor is Zn(2+).

It is found in the membrane. It catalyses the reaction an N-acylsphing-4-enine + H2O = sphing-4-enine + a fatty acid. Functionally, hydrolyzes the sphingolipid ceramide into sphingosine and free fatty acid. The polypeptide is Alkaline ceramidase (Caenorhabditis briggsae).